The chain runs to 538 residues: Furcatin hydrolase (538 aa).

The N-terminal 66 residues, 1–66, are a transit peptide targeting the chloroplast; sequence MATITTLASS…NFNKDNWLAS (66 aa). The disordered stretch occupies residues 18 to 37; that stretch reads SFPGGSSRKPKKDNLSIKPP. A beta-D-glucoside-binding positions include Gln88, His192, and 237 to 238; that span reads NE. Glu238 functions as the Proton donor in the catalytic mechanism. An intrachain disulfide couples Cys257 to Cys260. A beta-D-glucoside is bound by residues Tyr376, Glu447, Trp494, 501–502, and Phe510; that span reads EW. The active-site Nucleophile is Glu447.

Belongs to the glycosyl hydrolase 1 family. As to expression, expressed in young and mature leaves, but not in fruit and stem.

It is found in the plastid. The protein localises to the chloroplast. The catalysed reaction is 7-[beta-D-apiofuranosyl-(1-&gt;6)-beta-D-glucopyranosyloxy]isoflavonoid + H2O = a 7-hydroxyisoflavonoid + beta-D-apiofuranosyl-(1-&gt;6)-D-glucose.. In terms of biological role, disaccharide-specific acuminosidase, hydrolyzes the beta-glycosidic bond between p-allylphenol and acuminose with retention of anomeric configuration. Has highest activity towards furcatin, and lower activity towards beta-primeverosides and beta-vicianoside. Has very low activity towards beta-gentobiosides. This chain is Furcatin hydrolase, found in Viburnum furcatum (Scarlet leaved viburnum).